The primary structure comprises 262 residues: Versicolorin reductase 1 (262 aa).

Residues Ile-21, Asp-67, Asn-94, and Arg-127 each contribute to the NADP(+) site. Catalysis depends on proton donor residues Ser-143 and Ser-144. Positions 158, 162, 191, and 193 each coordinate NADP(+). Tyr-158 (proton acceptor) is an active-site residue. Catalysis depends on Lys-162, which acts as the Lowers pKa of active site Tyr.

Belongs to the short-chain dehydrogenases/reductases (SDR) family.

The protein resides in the cytoplasm. Its subcellular location is the cytosol. The catalysed reaction is (4S,8R)-2,13,16,20-tetrahydroxy-7,9-dioxapentacyclo[10.8.0.0(3,10).0(4,8).0(14,19)]icosa-1(12),2,5,10,13,16,19-heptaen-18-one + NADPH + H(+) = (4S,8R,16R)-2,13,16,20-tetrahydroxy-7,9-dioxapentacyclo[10.8.0.0(3,10).0(4,8).0(14,19)]icosa-1(12),2,5,10,13,19-hexaen-18-one + NADP(+). The protein operates within mycotoxin biosynthesis; aflatoxin biosynthesis. Cytochrome P450 monooxygenase; part of the gene cluster that mediates the biosynthesis of aflatoxins, a group of polyketide-derived furanocoumarins, and part of the most toxic and carcinogenic compounds among the known mycotoxins. The four major aflatoxins produced by A.parasiticus are aflatoxin B1 (AFB1), aflatoxin B2 (AFB2), aflatoxin G1 (AFG1) and aflatoxin G2 (AFG2). Within the aflatoxin pathway, with the cytochrome P450 monooxygenase aflN, the versicolorin reductase aflM, is involved in conversion of VERA to demethylsterigmatocystin (DMST). The biosynthesis of aflatoxins begins with the norsolorinic acid synthase aflC that combines a hexanoyl starter unit produced by the fatty acid synthase aflA/aflB and 7 malonyl-CoA extender units to synthesize the precursor NOR. The second step is the conversion of NOR to averantin and requires the norsolorinic acid ketoreductase aflD, which catalyzes the dehydration of norsolorinic acid to form (1'S)-averantin. The norsolorinic acid reductases aflE and aflF may also play a role in the conversion of NOR to AVN. The cytochrome P450 monooxygenase aflG then catalyzes the hydroxylation of AVN to 5'hydroxyaverantin (HAVN). The next step is performed by the 5'-hydroxyaverantin dehydrogenase aflH that transforms HAVN to 5'-oxoaverantin (OAVN) which is further converted to averufin (AVF) by aflK that plays a dual role in the pathway, as a 5'-oxoaverantin cyclase that mediates conversion of 5'-oxoaverantin, as well as a versicolorin B synthase in a later step in the pathway. The averufin oxidase aflI catalyzes the conversion of AVF to versiconal hemiacetal acetate (VHA). VHA is then the substrate for the versiconal hemiacetal acetate esterase aflJ to yield versiconal (VAL). Versicolorin B synthase aflK then converts VAL to versicolorin B (VERB) by closing the bisfuran ring of aflatoxin which is required for DNA-binding, thus giving to aflatoxin its activity as a mutagen. Then, the activity of the versicolorin B desaturase aflL leads to versicolorin A (VERA). A branch point starts from VERB since it can also be converted to dihydrodemethylsterigmatocystin (DMDHST), probably also by aflL, VERA being a precursor for aflatoxins B1 and G1, and DMDHST for aflatoxins B2 and G2. Next, the versicolorin reductase aflM and the cytochrome P450 monooxygenase aflN are involved in conversion of VERA to demethylsterigmatocystin (DMST). AflX and aflY seem also involved in this step, through probable aflX-mediated epoxide ring-opening step following versicolorin A oxidation and aflY-mediated Baeyer-Villiger oxidation required for the formation of the xanthone ring. The methyltransferase aflO then leads to the modification of DMST to sterigmatocystin (ST), and of DMDHST to dihydrosterigmatocystin (DHST). Both ST and DHST are then substrates of the O-methyltransferase aflP to yield O-methylsterigmatocystin (OMST) and dihydro-O-methylsterigmatocystin (DHOMST), respectively. Finally OMST is converted to aflatoxins B1 and G1, and DHOMST to aflatoxins B2 and G2, via the action of several enzymes including O-methylsterigmatocystin oxidoreductase aflQ, the cytochrome P450 monooxygenase aflU, but also the NADH-dependent flavin oxidoreductase nadA which is specifically required for the synthesis of AFG1. This chain is Versicolorin reductase 1, found in Aspergillus parasiticus (strain ATCC 56775 / NRRL 5862 / SRRC 143 / SU-1).